Consider the following 207-residue polypeptide: MIOREX complex component 11 (207 aa).

The N-terminal 46 residues, 1–46 (MTVMNLFFRPCQLQMGSGPLELMLKRPTQLTTFMNTRPGGSTQIRF), are a transit peptide targeting the mitochondrion. The Mitochondrial matrix segment spans residues 47–98 (ISGNLDPVKRREDRLRKIFSKSRLLTRLNKNPKFSHYFDRLSEAGTVPTLTS). Residues 99–119 (FFILHEVTAILPLFLLWWLLY) form a helical membrane-spanning segment. The Mitochondrial intermembrane portion of the chain corresponds to 120–177 (NLDLSDDFKLPNFLNGLMDSCHTAMEKFVGKRYQECLNKNKLILSGTVAYVTVKLLYP). A helical transmembrane segment spans residues 178 to 198 (VRIFISIWGAPYFGKWLLLPF). Residues 199–207 (QKLKHLIKK) lie on the Mitochondrial matrix side of the membrane.

This sequence belongs to the MRX11 family. As to quaternary structure, associates with the mitochondrial ribosome.

It localises to the mitochondrion. The protein localises to the mitochondrion inner membrane. In terms of biological role, component of MIOREX complexes, large expressome-like assemblies of ribosomes with factors involved in all the steps of post-transcriptional gene expression. The chain is MIOREX complex component 11 from Saccharomyces cerevisiae (strain ATCC 204508 / S288c) (Baker's yeast).